Consider the following 46-residue polypeptide: Protein PsbN (46 aa).

Residues 10 to 30 form a helical membrane-spanning segment; it reads LAIIVLVVLLGLTGLGVYMAF.

It belongs to the PsbN family.

The protein resides in the cellular thylakoid membrane. May play a role in photosystem I and II biogenesis. The polypeptide is Protein PsbN (Prochlorococcus marinus (strain MIT 9211)).